A 299-amino-acid polypeptide reads, in one-letter code: Protease HtpX homolog (299 aa).

The next 2 membrane-spanning stretches (helical) occupy residues 5–25 (IFLFILTNILVITTIGIVLSV) and 44–64 (MVALLVFSAVVGFVGSFMSLA). H155 provides a ligand contact to Zn(2+). Residue E156 is part of the active site. Residue H159 participates in Zn(2+) binding. Transmembrane regions (helical) follow at residues 170 to 190 (LLQGIVNTFVVFLSRIAAWIA) and 205 to 225 (FIAVIVFQIIFSVLGSLVVFA). E231 is a Zn(2+) binding site.

It belongs to the peptidase M48B family. It depends on Zn(2+) as a cofactor.

The protein resides in the cell membrane. In Bacillus pumilus (strain SAFR-032), this protein is Protease HtpX homolog.